A 279-amino-acid polypeptide reads, in one-letter code: DegV domain-containing protein SA1258 (279 aa).

Residues 4-278 enclose the DegV domain; the sequence is QIIVTDSTSD…QGAIGLVVLK (275 aa). Hexadecanoate-binding residues include Thr61 and Ser93.

In terms of biological role, may bind long-chain fatty acids, such as palmitate, and may play a role in lipid transport or fatty acid metabolism. This chain is DegV domain-containing protein SA1258, found in Staphylococcus aureus (strain N315).